Consider the following 432-residue polypeptide: Histidinol dehydrogenase (432 aa).

Residues Tyr130, Gln191, and Asn214 each contribute to the NAD(+) site. The substrate site is built by Ser237, Gln259, and His262. Positions 259 and 262 each coordinate Zn(2+). Catalysis depends on proton acceptor residues Glu327 and His328. Substrate contacts are provided by His328, Asp361, Glu415, and His420. Asp361 provides a ligand contact to Zn(2+). Residue His420 participates in Zn(2+) binding.

Belongs to the histidinol dehydrogenase family. It depends on Zn(2+) as a cofactor.

The catalysed reaction is L-histidinol + 2 NAD(+) + H2O = L-histidine + 2 NADH + 3 H(+). Its pathway is amino-acid biosynthesis; L-histidine biosynthesis; L-histidine from 5-phospho-alpha-D-ribose 1-diphosphate: step 9/9. In terms of biological role, catalyzes the sequential NAD-dependent oxidations of L-histidinol to L-histidinaldehyde and then to L-histidine. This chain is Histidinol dehydrogenase, found in Agrobacterium fabrum (strain C58 / ATCC 33970) (Agrobacterium tumefaciens (strain C58)).